We begin with the raw amino-acid sequence, 195 residues long: UPF0314 protein RHECIAT_CH0004233 (195 aa).

Helical transmembrane passes span 15–35, 64–84, 127–147, and 150–170; these read FWFV…YLMG, WYTP…YLIL, GDSI…FFFA, and APVA…GYVI.

This sequence belongs to the UPF0314 family.

The protein localises to the cell membrane. The sequence is that of UPF0314 protein RHECIAT_CH0004233 from Rhizobium etli (strain CIAT 652).